Reading from the N-terminus, the 205-residue chain is Probable molybdenum cofactor guanylyltransferase (205 aa).

Residues 10-12 (LAG), lysine 22, aspartate 69, and aspartate 100 contribute to the GTP site. Residue aspartate 100 coordinates Mg(2+).

Belongs to the MobA family. The cofactor is Mg(2+).

It localises to the cytoplasm. The catalysed reaction is Mo-molybdopterin + GTP + H(+) = Mo-molybdopterin guanine dinucleotide + diphosphate. Functionally, transfers a GMP moiety from GTP to Mo-molybdopterin (Mo-MPT) cofactor (Moco or molybdenum cofactor) to form Mo-molybdopterin guanine dinucleotide (Mo-MGD) cofactor. This is Probable molybdenum cofactor guanylyltransferase from Natranaerobius thermophilus (strain ATCC BAA-1301 / DSM 18059 / JW/NM-WN-LF).